The chain runs to 317 residues: Probable cell division protein WhiA (317 aa).

The H-T-H motif DNA-binding region spans Ser275–Glu308.

The protein belongs to the WhiA family.

In terms of biological role, involved in cell division and chromosome segregation. In Desulfitobacterium hafniense (strain DSM 10664 / DCB-2), this protein is Probable cell division protein WhiA.